The primary structure comprises 92 residues: Elongation factor 1-beta (92 aa).

The protein belongs to the EF-1-beta/EF-1-delta family.

Functionally, promotes the exchange of GDP for GTP in EF-1-alpha/GDP, thus allowing the regeneration of EF-1-alpha/GTP that could then be used to form the ternary complex EF-1-alpha/GTP/AAtRNA. The polypeptide is Elongation factor 1-beta (Hyperthermus butylicus (strain DSM 5456 / JCM 9403 / PLM1-5)).